The chain runs to 362 residues: Peptide chain release factor 1 (362 aa).

Glutamine 237 carries the post-translational modification N5-methylglutamine.

Belongs to the prokaryotic/mitochondrial release factor family. Methylated by PrmC. Methylation increases the termination efficiency of RF1.

The protein localises to the cytoplasm. Its function is as follows. Peptide chain release factor 1 directs the termination of translation in response to the peptide chain termination codons UAG and UAA. This Marinomonas sp. (strain MWYL1) protein is Peptide chain release factor 1.